Consider the following 248-residue polypeptide: Killer cell lectin-like receptor subfamily I member 2 (248 aa).

Topologically, residues 1 to 79 (MHKKKHIKHG…GIDPWLTTWQ (79 aa)) are cytoplasmic. Positions 19 to 44 (IGTKSPTFQEKQRPSKTDQRSTVWRE) are disordered. Residues 28–44 (EKQRPSKTDQRSTVWRE) show a composition bias toward basic and acidic residues. Residues 80 to 100 (MITVILATLCIILVTKVGFLI) traverse the membrane as a helical; Signal-anchor for type II membrane protein segment. At 101-248 (PSLFSKGEKQ…KKTYICEFNI (148 aa)) the chain is on the extracellular side. 3 cysteine pairs are disulfide-bonded: cysteine 132–cysteine 145, cysteine 161–cysteine 244, and cysteine 223–cysteine 236. The 107-residue stretch at 139-245 (FGNNFYCVFR…CSAKKTYICE (107 aa)) folds into the C-type lectin domain. Residues asparagine 197, asparagine 214, and asparagine 220 are each glycosylated (N-linked (GlcNAc...) asparagine).

As to quaternary structure, heterodimer with KLRE1. Expressed in natural killer (NK) cells.

It is found in the cell membrane. In terms of biological role, lectin-like receptor for natural killer (NK) cells. Heterodimer formation with KLRE1 mediates NK cell cytolytic activity. This is Killer cell lectin-like receptor subfamily I member 2 from Mus musculus (Mouse).